The primary structure comprises 479 residues: Protein pleiotropic regulator PRL2 (479 aa).

WD repeat units follow at residues 168-198, 210-240, 252-282, 293-323, 335-364, 377-406, and 426-456; these read GHLG…KIWD, GHIG…KCWD, GHLH…RVWD, PHDS…KFWD, NHKK…KKFS, LQRD…WFWD, and ESEA…KMWK. 2 short sequence motifs (DWD box) span residues 269 to 284 and 310 to 325; these read VLTG…WDIR and VITG…WDLR. Residues 458 to 479 are disordered; it reads DEDATPETHPLNFKPPKEIRRF.

This sequence belongs to the WD repeat PRL1/PRL2 family.

Its function is as follows. Pleiotropic regulator. In Arabidopsis thaliana (Mouse-ear cress), this protein is Protein pleiotropic regulator PRL2 (PRL2).